Consider the following 360-residue polypeptide: Nucleoporin SEH1-A (360 aa).

WD repeat units lie at residues 10-49 (DHKD…NWHC), 55-96 (THSG…SNDK), 111-152 (DSRT…NLSQ), 160-210 (SCKL…RKYA), 217-258 (SVSD…KELS), and 276-315 (NHNS…NWKC).

This sequence belongs to the WD repeat SEC13 family. As to quaternary structure, component of the Nup107-160 subcomplex of the nuclear pore complex (NPC). The Nup107-160 subcomplex includes NUP160, NUP133, NUP107, NUP98, NUP85, NUP43, NUP37, SEH1 and SEC13. Component of the GATOR2 subcomplex, composed of MIOS, SEC13, SEH1L, WDR24 and WDR59. The GATOR2 complex interacts with CASTOR1 and CASTOR2; the interaction is negatively regulated by arginine. The GATOR2 complex interacts with SESN1, SESN2 and SESN3; the interaction is negatively regulated by amino acids.

Its subcellular location is the chromosome. The protein resides in the centromere. It localises to the kinetochore. The protein localises to the nucleus. It is found in the nuclear pore complex. Its subcellular location is the lysosome membrane. The GATOR2 complex is negatively regulated by the upstream amino acid sensors CASTOR1 and SESN2, which sequester the GATOR2 complex in absence of amino acids. In the presence of abundant amino acids, GATOR2 is released from CASTOR1 and SESN2 and activated. Functionally, component of the Nup107-160 subcomplex of the nuclear pore complex (NPC). The Nup107-160 subcomplex is required for the assembly of a functional NPC. The Nup107-160 subcomplex is also required for normal kinetochore microtubule attachment, mitotic progression and chromosome segregation. This subunit plays a role in recruitment of the Nup107-160 subcomplex to the kinetochore. As a component of the GATOR2 complex, functions as an activator of the amino acid-sensing branch of the mTORC1 signaling pathway. The GATOR2 complex indirectly activates mTORC1 through the inhibition of the GATOR1 subcomplex. GATOR2 probably acts as an E3 ubiquitin-protein ligase toward GATOR1. In the presence of abundant amino acids, the GATOR2 complex mediates ubiquitination of the NPRL2 core component of the GATOR1 complex, leading to GATOR1 inactivation. In the absence of amino acids, GATOR2 is inhibited, activating the GATOR1 complex. The sequence is that of Nucleoporin SEH1-A (seh1l-a) from Xenopus laevis (African clawed frog).